A 365-amino-acid chain; its full sequence is Aminomethyltransferase (365 aa).

Belongs to the GcvT family. In terms of assembly, the glycine cleavage system is composed of four proteins: P, T, L and H.

The catalysed reaction is N(6)-[(R)-S(8)-aminomethyldihydrolipoyl]-L-lysyl-[protein] + (6S)-5,6,7,8-tetrahydrofolate = N(6)-[(R)-dihydrolipoyl]-L-lysyl-[protein] + (6R)-5,10-methylene-5,6,7,8-tetrahydrofolate + NH4(+). In terms of biological role, the glycine cleavage system catalyzes the degradation of glycine. The polypeptide is Aminomethyltransferase (Bacillus pumilus (strain SAFR-032)).